Reading from the N-terminus, the 390-residue chain is Elongation factor Tu 1 (390 aa).

The tr-type G domain maps to Lys-10 to Arg-201. The tract at residues Gly-19–Thr-26 is G1. A GTP-binding site is contributed by Gly-19–Thr-26. Residue Thr-26 participates in Mg(2+) binding. The G2 stretch occupies residues Gly-55–Ala-59. Residues Asp-76–Gly-79 form a G3 region. GTP is bound by residues Asp-76–His-80 and Asn-131–Asp-134. Residues Asn-131–Asp-134 form a G4 region. The tract at residues Ser-168–Leu-170 is G5.

Belongs to the TRAFAC class translation factor GTPase superfamily. Classic translation factor GTPase family. EF-Tu/EF-1A subfamily. Monomer.

It localises to the cytoplasm. The catalysed reaction is GTP + H2O = GDP + phosphate + H(+). Functionally, GTP hydrolase that promotes the GTP-dependent binding of aminoacyl-tRNA to the A-site of ribosomes during protein biosynthesis. This Wolbachia pipientis wMel protein is Elongation factor Tu 1.